Here is a 394-residue protein sequence, read N- to C-terminus: Phosphoglycerate kinase (394 aa).

Substrate is bound by residues 21 to 23 (DLN), R37, 60 to 63 (HLGR), R115, and R148. ATP contacts are provided by residues K199, E321, and 347–350 (GGDT).

It belongs to the phosphoglycerate kinase family. As to quaternary structure, monomer.

Its subcellular location is the cytoplasm. It carries out the reaction (2R)-3-phosphoglycerate + ATP = (2R)-3-phospho-glyceroyl phosphate + ADP. It functions in the pathway carbohydrate degradation; glycolysis; pyruvate from D-glyceraldehyde 3-phosphate: step 2/5. This is Phosphoglycerate kinase from Aromatoleum aromaticum (strain DSM 19018 / LMG 30748 / EbN1) (Azoarcus sp. (strain EbN1)).